Reading from the N-terminus, the 1492-residue chain is Neogenin (1492 aa).

The signal sequence occupies residues 1–36 (MAAEREAGRLLCTSSSRRCCPPPPLLLLLPLLLLLG). Topologically, residues 37–1136 (RPASGAAATK…PTSPLDSNML (1100 aa)) are extracellular. 4 Ig-like C2-type domains span residues 63-158 (PFYF…AKLT), 163-249 (PRFT…AELK), 254-347 (PEEI…AELT), and 352-437 (PGFL…AQLI). The N-linked (GlcNAc...) asparagine glycan is linked to Asn84. 3 cysteine pairs are disulfide-bonded: Cys85-Cys140, Cys184-Cys232, and Cys281-Cys331. Residue Asn221 is glycosylated (N-linked (GlcNAc...) asparagine). An N-linked (GlcNAc...) asparagine glycan is attached at Asn337. Cys373 and Cys421 are oxidised to a cystine. 6 consecutive Fibronectin type-III domains span residues 472-566 (APRD…TQPE), 572-662 (PAPN…TLSD), 667-762 (APQN…TFES), 772-862 (VPSS…RPHT), 887-986 (PPVG…LVPT), and 988-1085 (PPKD…TPKA). 2 N-linked (GlcNAc...) asparagine glycosylation sites follow: Asn501 and Asn520. 2 N-linked (GlcNAc...) asparagine glycosylation sites follow: Asn670 and Asn746. Asn940 carries an N-linked (GlcNAc...) asparagine glycan. Positions 1072 to 1128 (GPMSEAVQFRTPKADSSDKMPNDQALGSAGKGSRLPDLGSDYKPPMSGSNSPHGSPT) are disordered. Over residues 1083 to 1092 (PKADSSDKMP) the composition is skewed to basic and acidic residues. The span at 1118 to 1128 (SGSNSPHGSPT) shows a compositional bias: polar residues. The helical transmembrane segment at 1137–1157 (LVIIVSVGVITIVVVVVIAVF) threads the bilayer. The Cytoplasmic portion of the chain corresponds to 1158-1492 (CTRRTTSHQK…MKDLNAITTA (335 aa)). Disordered stretches follow at residues 1205-1237 (PIDK…SMDS), 1266-1300 (PKMM…HSSS), and 1321-1396 (SMSL…FAVP). Phosphoserine occurs at positions 1209 and 1225. A compositionally biased stretch (polar residues) spans 1222-1237 (PRNSQDITPVDNSMDS). Thr1229 bears the Phosphothreonine mark. Composition is skewed to polar residues over residues 1321-1353 (SMSL…TCCT) and 1361-1380 (ATSS…QSLP). Phosphoserine is present on Ser1432. The residue at position 1435 (Thr1435) is a Phosphothreonine. Phosphoserine is present on residues Ser1463, Ser1465, and Ser1466.

The protein belongs to the immunoglobulin superfamily. DCC family. As to quaternary structure, interacts with BMP2, BMP4, BMP6, and BMP7. Interacts with RGMA and RGMB. Interacts with MYO10. In terms of tissue distribution, widely expressed.

It localises to the cell membrane. In terms of biological role, multi-functional cell surface receptor regulating cell adhesion in many diverse developmental processes, including neural tube and mammary gland formation, myogenesis and angiogenesis. Receptor for members of the BMP, netrin, and repulsive guidance molecule (RGM) families. Netrin-Neogenin interactions result in a chemoattractive axon guidance response and cell-cell adhesion, the interaction between NEO1/Neogenin and RGMa and RGMb induces a chemorepulsive response. The protein is Neogenin of Mus musculus (Mouse).